The following is a 340-amino-acid chain: Dihydroorotase (340 aa).

The Zn(2+) site is built by H14 and H16. Substrate is bound by residues 16–18 (HLR) and N42. Positions 100, 137, and 175 each coordinate Zn(2+). N6-carboxylysine is present on K100. Residue H137 participates in substrate binding. Substrate is bound at residue L220. D248 serves as a coordination point for Zn(2+). D248 is an active-site residue. Substrate is bound by residues H252 and A264.

This sequence belongs to the metallo-dependent hydrolases superfamily. DHOase family. Class II DHOase subfamily. As to quaternary structure, homodimer. The cofactor is Zn(2+).

The catalysed reaction is (S)-dihydroorotate + H2O = N-carbamoyl-L-aspartate + H(+). It functions in the pathway pyrimidine metabolism; UMP biosynthesis via de novo pathway; (S)-dihydroorotate from bicarbonate: step 3/3. Its function is as follows. Catalyzes the reversible cyclization of carbamoyl aspartate to dihydroorotate. This is Dihydroorotase from Sphingopyxis alaskensis (strain DSM 13593 / LMG 18877 / RB2256) (Sphingomonas alaskensis).